The chain runs to 147 residues: Hemoglobin subunit beta (147 aa).

Valine 2 bears the N-acetylvaline mark. The region spanning 3–147 (HLTPEEKSAV…VANALAHKYH (145 aa)) is the Globin domain. Threonine 13 bears the Phosphothreonine mark. Serine 45 carries the phosphoserine modification. The residue at position 60 (lysine 60) is an N6-acetyllysine. Histidine 64 provides a ligand contact to heme b. An N6-acetyllysine modification is found at lysine 83. Histidine 93 is a heme b binding site. Cysteine 94 is subject to S-nitrosocysteine. Lysine 145 carries the post-translational modification N6-acetyllysine.

Belongs to the globin family. In terms of assembly, heterotetramer of two alpha chains and two beta chains in adult hemoglobin A (HbA). Red blood cells.

In terms of biological role, involved in oxygen transport from the lung to the various peripheral tissues. This Pan paniscus (Pygmy chimpanzee) protein is Hemoglobin subunit beta (HBB).